The sequence spans 364 residues: Paraneoplastic antigen Ma2 homolog (364 aa).

At Ala2 the chain carries N-acetylalanine. Acidic residues predominate over residues 335 to 353 (EEEEASFENESIEEPEEGD). The tract at residues 335-364 (EEEEASFENESIEEPEEGDGYGGWNHEGDD) is disordered. Positions 354–364 (GYGGWNHEGDD) are enriched in gly residues.

Belongs to the PNMA family.

The protein resides in the nucleus. The protein localises to the nucleolus. This chain is Paraneoplastic antigen Ma2 homolog (PNMA2), found in Macaca fascicularis (Crab-eating macaque).